Consider the following 602-residue polypeptide: Threonine--tRNA ligase (602 aa).

The interval aspartate 208–proline 499 is catalytic. Residues cysteine 300, histidine 351, and histidine 476 each coordinate Zn(2+).

The protein belongs to the class-II aminoacyl-tRNA synthetase family. In terms of assembly, homodimer. Requires Zn(2+) as cofactor.

The protein localises to the cytoplasm. The catalysed reaction is tRNA(Thr) + L-threonine + ATP = L-threonyl-tRNA(Thr) + AMP + diphosphate + H(+). Its function is as follows. Catalyzes the attachment of threonine to tRNA(Thr) in a two-step reaction: L-threonine is first activated by ATP to form Thr-AMP and then transferred to the acceptor end of tRNA(Thr). Also edits incorrectly charged L-seryl-tRNA(Thr). The protein is Threonine--tRNA ligase of Campylobacter jejuni subsp. jejuni serotype O:2 (strain ATCC 700819 / NCTC 11168).